A 299-amino-acid chain; its full sequence is Transcription elongation factor A protein 2 (299 aa).

The 78-residue stretch at 5-82 (EEIARIARRL…KSWKKLLDVS (78 aa)) folds into the TFIIS N-terminal domain. Lys-57 participates in a covalent cross-link: Glycyl lysine isopeptide (Lys-Gly) (interchain with G-Cter in ubiquitin). Phosphoserine is present on residues Ser-59 and Ser-100. The disordered stretch occupies residues 83–126 (DGKSRDQGRGTPLPTSSSKDASGTTDLSCKKPDPPRTSSTPRIT). Residues 95–109 (LPTSSSKDASGTTDL) are compositionally biased toward polar residues. The 117-residue stretch at 138-254 (VRNKCREMLT…EHQMARTGGT (117 aa)) folds into the TFIIS central domain. The segment at 257–297 (DLFTCNKCRKKNCTYTQVQTRSSDEPMTTYVVCNECGNRWK) adopts a TFIIS-type zinc-finger fold. 4 residues coordinate Zn(2+): Cys-261, Cys-264, Cys-289, and Cys-292.

It belongs to the TFS-II family. Interacts with the basal transcription factor GTF2B. Interacts with REXO1. Testis specific.

Its subcellular location is the nucleus. Necessary for efficient RNA polymerase II transcription elongation past template-encoded arresting sites. The arresting sites in DNA have the property of trapping a certain fraction of elongating RNA polymerases that pass through, resulting in locked ternary complexes. Cleavage of the nascent transcript by S-II allows the resumption of elongation from the new 3'-terminus. The sequence is that of Transcription elongation factor A protein 2 (Tcea2) from Rattus norvegicus (Rat).